The primary structure comprises 2115 residues: Non-reducing polyketide synthase ascC (2115 aa).

The disordered stretch occupies residues 1–21; that stretch reads MTLIQTKHSASAAVFSPQSTA. Positions 14–260 are N-terminal acylcarrier protein transacylase domain (SAT); that stretch reads VFSPQSTAPK…HNSRNTELAQ (247 aa). Residues 381–805 enclose the Ketosynthase family 3 (KS3) domain; sequence PDSIAIVGSA…GSNSALICSE (425 aa). Residues C553, H689, and H728 each act as for beta-ketoacyl synthase activity in the active site. A malonyl-CoA:ACP transacylase (MAT) domain region spans residues 908–1210; the sequence is LTFSGQSRTT…ANPSAHTFQA (303 aa). S995 acts as the For acyl/malonyl transferase activity in catalysis. The interval 1280–1406 is N-terminal hotdog fold; the sequence is PKKVQQLVTL…GDFFATSGEM (127 aa). One can recognise a PKS/mFAS DH domain in the interval 1280–1581; it reads PKKVQQLVTL…FMRIKAAKLE (302 aa). Positions 1285-1580 are product template (PT) domain; sequence QLVTLKKTEG…QFMRIKAAKL (296 aa). Catalysis depends on H1315, which acts as the Proton acceptor; for dehydratase activity. Residues 1428 to 1581 are C-terminal hotdog fold; sequence DAERLRTATA…FMRIKAAKLE (154 aa). The Proton donor; for dehydratase activity role is filled by D1492. The interval 1587–1624 is disordered; that stretch reads ANPGSKTKSTNGNALPSVPRSVPAGPTSAPQQVAPTTM. The segment covering 1588–1600 has biased composition (polar residues); the sequence is NPGSKTKSTNGNA. The region spanning 1640 to 1724 is the Carrier domain; sequence PSKIADLKSL…PTAALTEGLV (85 aa). At S1674 the chain carries O-(pantetheine 4'-phosphoryl)serine. The segment covering 1734–1748 has biased composition (polar residues); the sequence is SDSIRNSTGFHTTIP. Positions 1734–1767 are disordered; that stretch reads SDSIRNSTGFHTTIPATPAELHSNPPDSLDGSTV. The tract at residues 1777–2107 is thioesterase (TE) domain; sequence ARFKLDTMVY…YDFLLGELEN (331 aa). Catalysis depends on for thioesterase activity residues S1897 and D2045.

It carries out the reaction 3 malonyl-CoA + acetyl-CoA + 2 H(+) = orsellinate + 3 CO2 + 4 CoA. It functions in the pathway secondary metabolite biosynthesis; terpenoid biosynthesis. Functionally, non-reducing polyketide synthase; part of the asc-1 gene cluster that mediates the biosynthesis of both ascochlorin and ascofuranone, a strong inhibitor of cyanide-insensitive alternative oxidases and a promising drug candidate against African trypanosomiasis. The first step in the pathway is performed by the non-reducing polyketide synthase ascC that produces orsellinic acid by condensing acetyl-CoA with 3 malonyl-CoA units. Orsellinic acid is then prenylated by the prenyltransferase ascA to yield ilicicolinic acid B. Ilicicolinic acid B is further reduced to ilicicolin B by the reductase ascB. The halogenase ascD then chlorinates ilicicolin B to produce ilicicolin A which is converted to ilicicolin A epoxide by the cytochrome P450 monooxygenase ascE that catalyzes stereoselective epoxidation of the terminal double bond of the prenyl group. Ilicicolin A epoxide is the last common precursor for the biosynthesis of ascofuranone and ascochlorin. The terpene cyclase ascF produces a monocyclic terpene, and the cyclization reaction is proposed to be initiated by protonation of the terminal epoxide of ilicicolin A epoxide to generate a monocyclic tertiarycation, which is followed by a series of hydride and methyl shifts with abstraction of proton, leading to the formation of the (14S,15R,19R)-trimethylcyclohexanone ring structure of ilicicolin C, which is finally reduced to ascochlorin by the dehydrogenase ascG. On the other hand, ilicicolin A epoxide is hydroxylated by the cytochrome P450 monooxygenase ascH, and the resultant product is cyclized by the terpene cyclase ascI to ascofuranol via protonation-initiated epoxide ring opening, which facilitates the 6-endo-tet cyclization to form the tetrahy-drofuran ring. Finally, ascofuranol is oxidized into ascofuranone by ascJ. This Acremonium egyptiacum (Oospora egyptiaca) protein is Non-reducing polyketide synthase ascC.